Reading from the N-terminus, the 187-residue chain is Ribosome-recycling factor (187 aa).

Residues 141-169 (LKKGNKNGDFNDDEFHDLEKKVQNETDAG) form a disordered region.

The protein belongs to the RRF family.

The protein localises to the cytoplasm. In terms of biological role, responsible for the release of ribosomes from messenger RNA at the termination of protein biosynthesis. May increase the efficiency of translation by recycling ribosomes from one round of translation to another. In Limosilactobacillus reuteri (strain DSM 20016) (Lactobacillus reuteri), this protein is Ribosome-recycling factor.